The sequence spans 334 residues: N-acetyl-gamma-glutamyl-phosphate reductase (334 aa).

Cysteine 142 is an active-site residue.

This sequence belongs to the NAGSA dehydrogenase family. Type 1 subfamily.

It localises to the cytoplasm. It catalyses the reaction N-acetyl-L-glutamate 5-semialdehyde + phosphate + NADP(+) = N-acetyl-L-glutamyl 5-phosphate + NADPH + H(+). It functions in the pathway amino-acid biosynthesis; L-arginine biosynthesis; N(2)-acetyl-L-ornithine from L-glutamate: step 3/4. In terms of biological role, catalyzes the NADPH-dependent reduction of N-acetyl-5-glutamyl phosphate to yield N-acetyl-L-glutamate 5-semialdehyde. The polypeptide is N-acetyl-gamma-glutamyl-phosphate reductase (Pelodictyon phaeoclathratiforme (strain DSM 5477 / BU-1)).